The chain runs to 1073 residues: Semaphorin-6D (1073 aa).

A signal peptide spans 1–20; sequence MGFLLLWFCVLFLLVSRLRA. At 21–662 the chain is on the extracellular side; sequence VSFPEDDEPL…GESNQMVHMN (642 aa). One can recognise a Sema domain in the interval 27-512; the sequence is DEPLNTVDYH…FSSCVVRIPL (486 aa). Residue Asn51 is glycosylated (N-linked (GlcNAc...) asparagine). 4 disulfides stabilise this stretch: Cys108–Cys118, Cys136–Cys145, Cys259–Cys370, and Cys284–Cys329. Residue Asn283 is glycosylated (N-linked (GlcNAc...) asparagine). N-linked (GlcNAc...) asparagine glycans are attached at residues Asn435 and Asn461. 4 disulfide bridges follow: Cys477-Cys506, Cys515-Cys533, Cys521-Cys568, and Cys525-Cys541. One can recognise a PSI domain in the interval 514–569; sequence RCERYGSCKKSCIASRDPYCGWLSQGVCERVTLGMLPGGYEQDTEYGNTAHLGDCH. Residue Asn631 is glycosylated (N-linked (GlcNAc...) asparagine). A helical transmembrane segment spans residues 663-683; the sequence is VLITCVFAAFVLGAFIAGVAV. Over 684-1073 the chain is Cytoplasmic; the sequence is YCYRDMFVRK…SVRPLNKYTY (390 aa). Ser723, Ser734, and Ser744 each carry phosphoserine. Disordered stretches follow at residues 745–825, 839–876, 919–986, and 1021–1073; these read RKEL…GHIP, TSFSNSNAHKAEKKLQSMDHPLTKSSSKREHRRSVDSR, PPKV…SPNG, and LQPS…KYTY. Position 773 is a phosphothreonine (Thr773). The span at 790-806 shows a compositional bias: basic and acidic residues; that stretch reads SHSEKAHSHGASRKEHP. A phosphoserine mark is found at Ser931, Ser957, and Ser983. Over residues 931–942 the composition is skewed to polar residues; it reads SPPSTLPRNSPT. Polar residues-rich tracts occupy residues 1021–1037 and 1059–1073; these read LQPSLSRQSSYTSNGTL and VPQTTSVRPLNKYTY.

It belongs to the semaphorin family. In terms of tissue distribution, expressed in brain and lung.

It localises to the cell membrane. In terms of biological role, shows growth cone collapsing activity on dorsal root ganglion (DRG) neurons in vitro. May be a stop signal for the DRG neurons in their target areas, and possibly also for other neurons. May also be involved in the maintenance and remodeling of neuronal connections. Ligand of TREM2 with PLXNA1 as coreceptor in dendritic cells, plays a role in the generation of immune responses and skeletal homeostasis. This is Semaphorin-6D (Sema6d) from Mus musculus (Mouse).